Consider the following 297-residue polypeptide: B-lymphocyte antigen CD20 (297 aa).

Over 1–56 (MTTPRNSVNGTFPAEPMKGPIAMQSGPKPLFRRMSSLVGPTQSFFMRESKTLGAVQ) the chain is Cytoplasmic. Serine 36 is subject to Phosphoserine. Residues 57–78 (IMNGLFHIALGGLLMIPAGIYA) form a helical membrane-spanning segment. Residues 74–80 (AGIYAPI) form an epitope 1 region. Over 79–84 (PICVTV) the chain is Extracellular. Residues 85–105 (WYPLWGGIMYIISGSLLAATE) traverse the membrane as a helical segment. Over 106–120 (KNSRKCLVKGKMIMN) the chain is Cytoplasmic. A lipid anchor (S-palmitoyl cysteine) is attached at cysteine 111. A helical membrane pass occupies residues 121–141 (SLSLFAAISGMILSIMDILNI). Over 142-188 (KISHFLKMESLNFIRAHTPYINIYNCEPANPSEKNSPSTQYCYSIQS) the chain is Extracellular. The tract at residues 146–160 (FLKMESLNFIRAHTP) is epitope 2. Residues cysteine 167 and cysteine 183 are joined by a disulfide bond. The interval 168–175 (EPANPSEK) is epitope 3 (recognized by antibodies, including Rituximab). Residues 189–209 (LFLGILSVMLIFAFFQELVIA) form a helical membrane-spanning segment. Over 210 to 297 (GIVENEWKRT…SSPIENDSSP (88 aa)) the chain is Cytoplasmic. Residue cysteine 220 is the site of S-palmitoyl cysteine attachment. The residue at position 225 (serine 225) is a Phosphoserine. Threonine 239 bears the Phosphothreonine mark. The segment at 247-297 (VGLTETSSQPKNEEDIEIIPIQEEEEEETETNFPEPPQDQESSPIENDSSP) is disordered. The segment covering 260 to 276 (EDIEIIPIQEEEEEETE) has biased composition (acidic residues). The segment covering 285–297 (DQESSPIENDSSP) has biased composition (polar residues).

Belongs to the MS4A family. Forms homotetramers. Interacts with the heavy and light chains of cell surface IgM, the antigen-binding components of the BCR. Post-translationally, phosphorylated on serines and threonines in resting B-cells. Protein kinase C/PKC can use CD20 as substrate. In terms of tissue distribution, expressed on B-cells.

Its subcellular location is the cell membrane. In terms of biological role, B-lymphocyte-specific membrane protein that plays a role in the regulation of cellular calcium influx necessary for the development, differentiation, and activation of B-lymphocytes. Functions as a store-operated calcium (SOC) channel component promoting calcium influx after activation by the B-cell receptor/BCR. The protein is B-lymphocyte antigen CD20 (MS4A1) of Homo sapiens (Human).